A 290-amino-acid polypeptide reads, in one-letter code: 33 kDa chaperonin (290 aa).

Cystine bridges form between cysteine 235-cysteine 237 and cysteine 268-cysteine 271.

It belongs to the HSP33 family. Under oxidizing conditions two disulfide bonds are formed involving the reactive cysteines. Under reducing conditions zinc is bound to the reactive cysteines and the protein is inactive.

The protein localises to the cytoplasm. Redox regulated molecular chaperone. Protects both thermally unfolding and oxidatively damaged proteins from irreversible aggregation. Plays an important role in the bacterial defense system toward oxidative stress. The chain is 33 kDa chaperonin from Streptococcus equi subsp. zooepidemicus (strain H70).